A 380-amino-acid polypeptide reads, in one-letter code: Interleukin-13 receptor subunit alpha-2 (380 aa).

The signal sequence occupies residues 1–26 (MAFVCLAIGCLYTFLISTTFGCTSSS). Residues 27–343 (DTEIKVNPPQ…EDLSKKTLLR (317 aa)) lie on the Extracellular side of the membrane. 3 consecutive Fibronectin type-III domains span residues 34 to 134 (PPQD…SPQG), 139 to 235 (KVQD…LQNI), and 240 to 333 (PPVY…CWEG). Residues Cys-65 and Cys-113 are joined by a disulfide bond. Asn-115 carries an N-linked (GlcNAc...) asparagine glycan. Disulfide bonds link Cys-145/Cys-155 and Cys-184/Cys-197. Residues Asn-215, Asn-290, and Asn-299 are each glycosylated (N-linked (GlcNAc...) asparagine). Cys-269 and Cys-316 form a disulfide bridge. The short motif at 322 to 326 (WSEWS) is the WSXWS motif element. Residues 344–363 (FWLPFGFILILVIFVTGLLL) traverse the membrane as a helical segment. Residues 364-380 (RKPNTYPKMIPEFFCDT) lie on the Cytoplasmic side of the membrane.

It belongs to the type I cytokine receptor family. Type 5 subfamily. In terms of assembly, interacts with IL4RA. Interacts with high affinity to interleukin-13 (IL13), but not to interleukin-4 (IL4). In terms of processing, cleaved by MMP8 leading to a soluble form that is also able to interact with IL13.

The protein localises to the cell membrane. Its function is as follows. Cell surface receptor that plays a role in the regulation of IL-13-mediated responses. Functions as a decoy receptor that inhibits IL-13- and IL-4-mediated signal transduction via the JAK-STAT pathway and thereby modulates immune responses and inflammation. Serves as a functional signaling receptor for IL-13 in an alternative pathway involving AP-1 ultimately leading to the production of TGFB1. The protein is Interleukin-13 receptor subunit alpha-2 (IL13RA2) of Homo sapiens (Human).